A 58-amino-acid chain; its full sequence is Metallothionein-1 (58 aa).

The beta stretch occupies residues 1–28 (PGPCCKDKCECAEGGCKTGCKCTSCRCA). Residues C4, C5, C9, C11, C16, C20, C22, C25, C27, C30, C33, C37, C39, C45, C49, C53, C55, and C56 each coordinate a divalent metal cation. Positions 29 to 58 (PCEKCTSGCKCPSKDECAKTCSKPCSCCXX) are alpha.

Belongs to the metallothionein superfamily. Type 3 family.

Functionally, metallothioneins have a high content of cysteine residues that bind various heavy metals. The different forms of lobster metallothioneins may have different biological functions. Class I MTS in marine crustacea are involved in the sequestration of elevated levels of heavy-metal ions. Binds 6 metal ions. Known to bind cadmium. The polypeptide is Metallothionein-1 (Homarus americanus (American lobster)).